A 232-amino-acid chain; its full sequence is MKKLLVASSASAALFAVGVGANAHAAEDNNVNQDQLAQTALNNTQQLNDAPVQEGAYNIAFDNSGYNFNFNSDGTNWSWSYNADSSAQQAPAQSTTQEQAPAAQQAPAQSTTQEQAPAAQQAPAQEQTQQPAQQPAQQQTQQPAQQSADSGSNVQVNDHLKAIAQRESGGDIHAINSSSGAAGKYQFLQTTWDSVAPAEYQGKPASEAPEAVQDAAAQKLYDTAGPSQWVTA.

The signal sequence occupies residues 1-25; the sequence is MKKLLVASSASAALFAVGVGANAHA. The interval 84 to 154 is disordered; the sequence is DSSAQQAPAQ…QQSADSGSNV (71 aa). Low complexity predominate over residues 87–148; sequence AQQAPAQSTT…QTQQPAQQSA (62 aa).

Belongs to the transglycosylase family. SceD subfamily.

It localises to the secreted. In terms of biological role, is able to cleave peptidoglycan and affects clumping and separation of bacterial cells. The chain is Probable transglycosylase SceD (sceD) from Staphylococcus carnosus (strain TM300).